A 544-amino-acid polypeptide reads, in one-letter code: Chaperonin GroEL 2 (544 aa).

ATP is bound by residues 30–33 (TLGP), 87–91 (DGTTT), Gly-415, 480–482 (NAA), and Asp-496.

The protein belongs to the chaperonin (HSP60) family. In terms of assembly, forms a cylinder of 14 subunits composed of two heptameric rings stacked back-to-back. Interacts with the co-chaperonin GroES.

The protein localises to the cytoplasm. It catalyses the reaction ATP + H2O + a folded polypeptide = ADP + phosphate + an unfolded polypeptide.. Its function is as follows. Together with its co-chaperonin GroES, plays an essential role in assisting protein folding. The GroEL-GroES system forms a nano-cage that allows encapsulation of the non-native substrate proteins and provides a physical environment optimized to promote and accelerate protein folding. This Albidiferax ferrireducens (strain ATCC BAA-621 / DSM 15236 / T118) (Rhodoferax ferrireducens) protein is Chaperonin GroEL 2.